The primary structure comprises 514 residues: Extracellular exo-inulinase inuE (514 aa).

Residues 1–18 (MRAFLALIFLTFVMNVES) form the signal peptide. Substrate-binding positions include 33–34 (ND) and Gln-52. Asp-34 acts as the Nucleophile in catalysis. The N-linked (GlcNAc...) asparagine glycan is linked to Asn-56. 2 residues coordinate substrate: Trp-60 and Ser-95. N-linked (GlcNAc...) asparagine glycans are attached at residues Asn-104 and Asn-110. 162-163 (RD) lines the substrate pocket. Asn-197 and Asn-203 each carry an N-linked (GlcNAc...) asparagine glycan. The substrate site is built by Glu-214 and Trp-300. Glu-214 (proton donor/acceptor) is an active-site residue. N-linked (GlcNAc...) asparagine glycosylation is found at Asn-357, Asn-371, Asn-389, and Asn-422.

Belongs to the glycosyl hydrolase 32 family.

The protein localises to the secreted. It carries out the reaction Hydrolysis of terminal, non-reducing (2-&gt;1)- and (2-&gt;6)-linked beta-D-fructofuranose residues in fructans.. Exo-inulinase involved in utilization of the plant storage polymer inulin, consisting of fructooligosaccharides with a degree of polymerization (DP) value from 2 to 60. Splits off terminal fructose units successively from the non-reducing end of the inulin molecule. This chain is Extracellular exo-inulinase inuE, found in Meyerozyma guilliermondii (Yeast).